A 273-amino-acid polypeptide reads, in one-letter code: tRNA pseudouridine synthase B (273 aa).

Catalysis depends on D38, which acts as the Nucleophile.

Belongs to the pseudouridine synthase TruB family. Type 1 subfamily.

The enzyme catalyses uridine(55) in tRNA = pseudouridine(55) in tRNA. Responsible for synthesis of pseudouridine from uracil-55 in the psi GC loop of transfer RNAs. The protein is tRNA pseudouridine synthase B of Campylobacter curvus (strain 525.92).